We begin with the raw amino-acid sequence, 897 residues long: Protein translocase subunit SecA (897 aa).

ATP contacts are provided by residues Q87, 105 to 109, and D512; that span reads GEGKT. Positions 846-897 are disordered; the sequence is EEEQQKQARKKMVFNLVDEDETSEPSKSKKLAGRNEPCPCGSGKKYKKCCGK. The Zn(2+) site is built by C883, C885, C894, and C895.

The protein belongs to the SecA family. As to quaternary structure, monomer and homodimer. Part of the essential Sec protein translocation apparatus which comprises SecA, SecYEG and auxiliary proteins SecDF-YajC and YidC. It depends on Zn(2+) as a cofactor.

Its subcellular location is the cell inner membrane. It localises to the cytoplasm. The enzyme catalyses ATP + H2O + cellular proteinSide 1 = ADP + phosphate + cellular proteinSide 2.. Part of the Sec protein translocase complex. Interacts with the SecYEG preprotein conducting channel. Has a central role in coupling the hydrolysis of ATP to the transfer of proteins into and across the cell membrane, serving as an ATP-driven molecular motor driving the stepwise translocation of polypeptide chains across the membrane. This is Protein translocase subunit SecA from Geobacter sulfurreducens (strain ATCC 51573 / DSM 12127 / PCA).